We begin with the raw amino-acid sequence, 234 residues long: Putative methyltransferase-like protein 15P1 (234 aa).

S-adenosyl-L-methionine-binding positions include 100 to 102 (GGH), Asp119, Phe146, Asp169, and Gln176.

It belongs to the methyltransferase superfamily. RsmH family.

In terms of biological role, probable S-adenosyl-L-methionine-dependent methyltransferase. The chain is Putative methyltransferase-like protein 15P1 (METTL15P1) from Homo sapiens (Human).